Consider the following 713-residue polypeptide: Glycine--tRNA ligase beta subunit (713 aa).

The protein belongs to the class-II aminoacyl-tRNA synthetase family. As to quaternary structure, tetramer of two alpha and two beta subunits.

The protein resides in the cytoplasm. It catalyses the reaction tRNA(Gly) + glycine + ATP = glycyl-tRNA(Gly) + AMP + diphosphate. The sequence is that of Glycine--tRNA ligase beta subunit from Picosynechococcus sp. (strain ATCC 27264 / PCC 7002 / PR-6) (Agmenellum quadruplicatum).